The following is a 321-amino-acid chain: Ribonuclease Z (321 aa).

The Zn(2+) site is built by His-62, His-64, Asp-66, His-67, His-139, Asp-210, and His-268. Asp-66 serves as the catalytic Proton acceptor.

It belongs to the RNase Z family. As to quaternary structure, homodimer. Requires Zn(2+) as cofactor.

It carries out the reaction Endonucleolytic cleavage of RNA, removing extra 3' nucleotides from tRNA precursor, generating 3' termini of tRNAs. A 3'-hydroxy group is left at the tRNA terminus and a 5'-phosphoryl group is left at the trailer molecule.. Functionally, zinc phosphodiesterase, which displays some tRNA 3'-processing endonuclease activity. Probably involved in tRNA maturation, by removing a 3'-trailer from precursor tRNA. The sequence is that of Ribonuclease Z from Trichodesmium erythraeum (strain IMS101).